We begin with the raw amino-acid sequence, 140 residues long: MIFSTMAKEFRYKGYTLQELEQMSLEELAKIMPARQRRTLLRRLKFGWSDQQKKLFKKILLAKEGKYKKPIKTHARNTIILPFMVGVTVHVYNGKEYVPVQIKPEMIGHYLGEFSFTTKRPKHSAPGIGATRSSAHVSKK.

The disordered stretch occupies residues 120–140; that stretch reads RPKHSAPGIGATRSSAHVSKK. Positions 131-140 are enriched in polar residues; it reads TRSSAHVSKK.

Belongs to the universal ribosomal protein uS19 family.

In terms of biological role, protein S19 forms a complex with S13 that binds strongly to the 16S ribosomal RNA. This Nanoarchaeum equitans (strain Kin4-M) protein is Small ribosomal subunit protein uS19.